Reading from the N-terminus, the 356-residue chain is Homoserine O-acetyltransferase (356 aa).

Positions 49 to 337 (VLICHALTGS…KSTHGHDAFL (289 aa)) constitute an AB hydrolase-1 domain. Ser143 functions as the Nucleophile in the catalytic mechanism. Substrate is bound at residue Arg212. Catalysis depends on residues Asp304 and His333. Asp334 lines the substrate pocket.

It belongs to the AB hydrolase superfamily. MetX family. As to quaternary structure, homodimer.

It is found in the cytoplasm. The catalysed reaction is L-homoserine + acetyl-CoA = O-acetyl-L-homoserine + CoA. Its pathway is amino-acid biosynthesis; L-methionine biosynthesis via de novo pathway; O-acetyl-L-homoserine from L-homoserine: step 1/1. Transfers an acetyl group from acetyl-CoA to L-homoserine, forming acetyl-L-homoserine. This chain is Homoserine O-acetyltransferase, found in Nostoc punctiforme (strain ATCC 29133 / PCC 73102).